Reading from the N-terminus, the 235-residue chain is tRNA pseudouridine synthase B (235 aa).

The Nucleophile role is filled by Asp48.

It belongs to the pseudouridine synthase TruB family. Type 1 subfamily.

It carries out the reaction uridine(55) in tRNA = pseudouridine(55) in tRNA. Functionally, responsible for synthesis of pseudouridine from uracil-55 in the psi GC loop of transfer RNAs. The sequence is that of tRNA pseudouridine synthase B from Parabacteroides distasonis (strain ATCC 8503 / DSM 20701 / CIP 104284 / JCM 5825 / NCTC 11152).